Consider the following 131-residue polypeptide: Profilin-1 (131 aa).

Belongs to the profilin family. In terms of assembly, occurs in many kinds of cells as a complex with monomeric actin in a 1:1 ratio.

It is found in the cytoplasm. The protein resides in the cytoskeleton. Functionally, binds to actin and affects the structure of the cytoskeleton. At high concentrations, profilin prevents the polymerization of actin, whereas it enhances it at low concentrations. By binding to PIP2, it inhibits the formation of IP3 and DG. The polypeptide is Profilin-1 (PRO1) (Triticum aestivum (Wheat)).